Here is an 82-residue protein sequence, read N- to C-terminus: High-potential iron-sulfur protein (82 aa).

Positions 42, 45, 60, and 74 each coordinate [4Fe-4S] cluster.

It belongs to the high-potential iron-sulfur protein (HiPIP) family. In terms of assembly, homodimer.

It is found in the periplasm. Functionally, specific class of high-redox-potential 4Fe-4S ferredoxins. Functions in anaerobic electron transport in most purple and in some other photosynthetic bacteria and in at least one genus (Paracoccus) of halophilic, denitrifying bacteria. This Marichromatium purpuratum (Chromatium purpuratum) protein is High-potential iron-sulfur protein (hip).